A 102-amino-acid polypeptide reads, in one-letter code: MHIDITHYLIVSALIFTIGIAGIFLNRKNVIIILMSIELILLSVNLNFVAFSAFFQDLVGQIFALFILTVAAAEAAIGLAILVVFFRNCGSIAVEDVNVMKG.

The next 3 helical transmembrane spans lie at 5 to 25, 31 to 51, and 66 to 86; these read ITHY…GIFL, IIIL…FVAF, and FILT…VVFF.

It belongs to the complex I subunit 4L family. As to quaternary structure, NDH-1 is composed of 14 different subunits. Subunits NuoA, H, J, K, L, M, N constitute the membrane sector of the complex.

It is found in the cell inner membrane. The enzyme catalyses a quinone + NADH + 5 H(+)(in) = a quinol + NAD(+) + 4 H(+)(out). NDH-1 shuttles electrons from NADH, via FMN and iron-sulfur (Fe-S) centers, to quinones in the respiratory chain. The immediate electron acceptor for the enzyme in this species is believed to be ubiquinone. Couples the redox reaction to proton translocation (for every two electrons transferred, four hydrogen ions are translocated across the cytoplasmic membrane), and thus conserves the redox energy in a proton gradient. The sequence is that of NADH-quinone oxidoreductase subunit K from Bartonella quintana (strain Toulouse) (Rochalimaea quintana).